Here is a 411-residue protein sequence, read N- to C-terminus: MRIALLSYRSKTHCGGQGVYVRHLSRELAELGHDVEVFSGQPYPEGLDPRVRLTKVPSLDLYREPDPFRIPRPSEIKTSIDLEELLTTWTAGFPEPKTFSLRAARVLAGRRGDFDVVHDNQCLGTGLLQIAKMGFPLVATVHHPITRDREVEVAAARWWRKPLVRRWYGFVEMQKRVARQIPELLTVSSASASDILTDFAVSPEQLHVVPLGVDTKLFQPREGRVRNRIIAIASADVPLKGVSHLLHAVARLRVERDVELQLVTKLEPNGPTEKLIAELGISDIVHTSSGLSDEELAALLASAEVACIPSLYEGFSLPAVEAMASGTPIVASRAGALPEVVGPDGECARLVTPADVDELTAVLGRLLDSPRELRRLGDNGRRRAVEVFSWQSVAAQTVAVYEKAIARVAAC.

This sequence belongs to the glycosyltransferase group 1 family. Glycosyltransferase 4 subfamily.

It catalyses the reaction [3-O-methyl-alpha-D-mannosyl-(1-&gt;4)](n)-3-O-methyl-D-mannose + GDP-alpha-D-mannose = alpha-D-mannosyl-(1-&gt;4)-[3-O-methyl-alpha-D-mannosyl-(1-&gt;4)](n)-3-O-methyl-D-mannose + GDP + H(+). The catalysed reaction is [3-O-methyl-alpha-D-mannosyl-(1-&gt;4)](n)-1-O,3-O-dimethyl-alpha-D-mannose + GDP-alpha-D-mannose = alpha-D-mannosyl-(1-&gt;4)-[3-O-methyl-alpha-D-mannosyl-(1-&gt;4)](n)-1-O,3-O-dimethyl-alpha-D-mannose + GDP + H(+). Activity is significantly enhanced in the presence of Mg(2+). In terms of biological role, glycosyltransferase involved in the biosynthesis of 3-O-methylmannose polysaccharides (MMP), which are intracellular polymethylated polysaccharides implicated in the modulation of fatty acid metabolism in non-tuberculous mycobacteria. Highly specific alpha-(1-&gt;4)-mannosyltransferase that can transfer mannose units from GDP-mannose to a wide range of alpha-(1-&gt;4) oligomannosides longer than three mannoses, including all hydrolytic products of MmpH. Can use synthetic trimannosides and tetramannosides as substrates, but not mono- and disaccharides, and is significantly more active with the methylated substrates, preferring the tetramannosides over the trimannosides. The protein is MMP alpha-(1-&gt;4)-mannosyltransferase of Mycolicibacterium hassiacum (strain DSM 44199 / CIP 105218 / JCM 12690 / 3849) (Mycobacterium hassiacum).